Consider the following 169-residue polypeptide: Lipoprotein signal peptidase (169 aa).

Helical transmembrane passes span 10-30 (LPWLWITVLVFVLDQLSKAFF), 40-60 (IVVIPDLFSWTLAYNTGAAFS), 68-88 (WQRWLFALIAIVVSAILVVWL), and 94-114 (GETWLAIALALVLGGALGNLY). Catalysis depends on residues Asp-124 and Asp-143. A helical membrane pass occupies residues 135-155 (YFPAFNLADSAITVGAVMLAL).

The protein belongs to the peptidase A8 family.

The protein localises to the cell inner membrane. It catalyses the reaction Release of signal peptides from bacterial membrane prolipoproteins. Hydrolyzes -Xaa-Yaa-Zaa-|-(S,diacylglyceryl)Cys-, in which Xaa is hydrophobic (preferably Leu), and Yaa (Ala or Ser) and Zaa (Gly or Ala) have small, neutral side chains.. The protein operates within protein modification; lipoprotein biosynthesis (signal peptide cleavage). In terms of biological role, this protein specifically catalyzes the removal of signal peptides from prolipoproteins. The polypeptide is Lipoprotein signal peptidase (Pseudomonas aeruginosa (strain UCBPP-PA14)).